The sequence spans 448 residues: Probable glycine dehydrogenase (decarboxylating) subunit 1 (448 aa).

The protein belongs to the GcvP family. N-terminal subunit subfamily. The glycine cleavage system is composed of four proteins: P, T, L and H. In this organism, the P 'protein' is a heterodimer of two subunits.

The catalysed reaction is N(6)-[(R)-lipoyl]-L-lysyl-[glycine-cleavage complex H protein] + glycine + H(+) = N(6)-[(R)-S(8)-aminomethyldihydrolipoyl]-L-lysyl-[glycine-cleavage complex H protein] + CO2. Its function is as follows. The glycine cleavage system catalyzes the degradation of glycine. The P protein binds the alpha-amino group of glycine through its pyridoxal phosphate cofactor; CO(2) is released and the remaining methylamine moiety is then transferred to the lipoamide cofactor of the H protein. This Staphylococcus epidermidis (strain ATCC 35984 / DSM 28319 / BCRC 17069 / CCUG 31568 / BM 3577 / RP62A) protein is Probable glycine dehydrogenase (decarboxylating) subunit 1.